Consider the following 181-residue polypeptide: Isopentenyl-diphosphate Delta-isomerase (181 aa).

Mn(2+) contacts are provided by His-25 and His-32. A Nudix hydrolase domain is found at 30–164 (PLHLAFSCWL…PWAFSPWMVM (135 aa)). Cys-67 is an active-site residue. A Mn(2+)-binding site is contributed by His-69. Residue Glu-87 participates in Mg(2+) binding. Mn(2+) is bound by residues Glu-114 and Glu-116. Residue Glu-116 is part of the active site.

The protein belongs to the IPP isomerase type 1 family. As to quaternary structure, homodimer. The cofactor is Mg(2+). Mn(2+) is required as a cofactor.

It is found in the cytoplasm. It carries out the reaction isopentenyl diphosphate = dimethylallyl diphosphate. It functions in the pathway isoprenoid biosynthesis; dimethylallyl diphosphate biosynthesis; dimethylallyl diphosphate from isopentenyl diphosphate: step 1/1. Functionally, catalyzes the 1,3-allylic rearrangement of the homoallylic substrate isopentenyl (IPP) to its highly electrophilic allylic isomer, dimethylallyl diphosphate (DMAPP). The protein is Isopentenyl-diphosphate Delta-isomerase of Salmonella agona (strain SL483).